The chain runs to 115 residues: NADH-ubiquinone oxidoreductase chain 3 (115 aa).

3 helical membrane passes run 3–23, 55–75, and 87–107; these read LMLT…IAFW, FFLV…LLPL, and VLFM…YEWI.

The protein belongs to the complex I subunit 3 family. In terms of assembly, core subunit of respiratory chain NADH dehydrogenase (Complex I) which is composed of 45 different subunits. Interacts with TMEM186. Interacts with TMEM242.

It localises to the mitochondrion inner membrane. It catalyses the reaction a ubiquinone + NADH + 5 H(+)(in) = a ubiquinol + NAD(+) + 4 H(+)(out). In terms of biological role, core subunit of the mitochondrial membrane respiratory chain NADH dehydrogenase (Complex I) which catalyzes electron transfer from NADH through the respiratory chain, using ubiquinone as an electron acceptor. Essential for the catalytic activity of complex I. This Dugong dugon (Dugong) protein is NADH-ubiquinone oxidoreductase chain 3.